Here is a 344-residue protein sequence, read N- to C-terminus: Methionine import ATP-binding protein MetN (344 aa).

Residues 2 to 241 enclose the ABC transporter domain; that stretch reads IELQGLSQRF…PQHEVTRAMI (240 aa). Position 38-45 (38-45) interacts with ATP; that stretch reads GRSGAGKS.

Belongs to the ABC transporter superfamily. Methionine importer (TC 3.A.1.24) family. In terms of assembly, the complex is composed of two ATP-binding proteins (MetN), two transmembrane proteins (MetI) and a solute-binding protein (MetQ).

It is found in the cell inner membrane. The enzyme catalyses L-methionine(out) + ATP + H2O = L-methionine(in) + ADP + phosphate + H(+). It catalyses the reaction D-methionine(out) + ATP + H2O = D-methionine(in) + ADP + phosphate + H(+). Functionally, part of the ABC transporter complex MetNIQ involved in methionine import. Responsible for energy coupling to the transport system. The sequence is that of Methionine import ATP-binding protein MetN from Cupriavidus metallidurans (strain ATCC 43123 / DSM 2839 / NBRC 102507 / CH34) (Ralstonia metallidurans).